We begin with the raw amino-acid sequence, 24 residues long: Brevinin-1BYb (24 aa).

The cysteines at positions 18 and 24 are disulfide-linked.

In terms of tissue distribution, expressed by the skin glands.

Its subcellular location is the secreted. Functionally, antibacterial activity against Gram-positive bacterium S.aureus and Gram-negative bacterium E.coli. Has moderate antifungal activity against C.albicans and strong hemolytic activity. The protein is Brevinin-1BYb of Rana boylii (Foothill yellow-legged frog).